The primary structure comprises 339 residues: Deubiquitinase and deneddylase Dub2 (339 aa).

Residues 36–56 form a helical membrane-spanning segment; that stretch reads IIIALFLIVISCGLILCAYTF. Active-site residues include His203, Asp220, and Cys282.

Belongs to the peptidase C48 family.

The protein localises to the secreted. It is found in the host cell. The protein resides in the membrane. In terms of biological role, effector proteins function to alter host cell physiology and promote bacterial survival in host tissues. This protease possesses deubiquitinating and deneddylating activities. In Chlamydia trachomatis serovar D (strain ATCC VR-885 / DSM 19411 / UW-3/Cx), this protein is Deubiquitinase and deneddylase Dub2 (cdu2).